Reading from the N-terminus, the 146-residue chain is Ribonuclease H (146 aa).

The RNase H type-1 domain maps to 1–138; the sequence is MYAWTDGACR…ADALANRGID (138 aa). Asp6, Glu44, Asp66, and Asp130 together coordinate Mg(2+).

The protein belongs to the RNase H family. In terms of assembly, monomer. The cofactor is Mg(2+).

It is found in the cytoplasm. The catalysed reaction is Endonucleolytic cleavage to 5'-phosphomonoester.. Functionally, endonuclease that specifically degrades the RNA of RNA-DNA hybrids. This Alkalilimnicola ehrlichii (strain ATCC BAA-1101 / DSM 17681 / MLHE-1) protein is Ribonuclease H.